The primary structure comprises 362 residues: Probable non-structural 41.0 kDa protein (362 aa).

The segment at 341 to 362 is disordered; it reads MNAAAPSAPTPTELPVFSPPSS.

In Maize rough dwarf virus (MRDV), this protein is Probable non-structural 41.0 kDa protein (S6).